The chain runs to 89 residues: Small ribosomal subunit protein uS14A (89 aa).

It belongs to the universal ribosomal protein uS14 family. In terms of assembly, part of the 30S ribosomal subunit. Contacts proteins S3 and S10.

In terms of biological role, binds 16S rRNA, required for the assembly of 30S particles and may also be responsible for determining the conformation of the 16S rRNA at the A site. The polypeptide is Small ribosomal subunit protein uS14A (Staphylococcus aureus (strain MRSA252)).